The sequence spans 326 residues: Gamma-resorcylate decarboxylase (326 aa).

Residues Glu8, His10, His164, and Asp287 each coordinate Mn(2+). Asp287 is an active-site residue.

It belongs to the metallo-dependent hydrolases superfamily. ACMSD family. As to quaternary structure, homotetramer. The cofactor is Mn(2+).

The catalysed reaction is 2,6-dihydroxybenzoate + H(+) = resorcinol + CO2. It catalyses the reaction 2,3-dihydroxybenzoate + H(+) = catechol + CO2. It functions in the pathway aromatic compound metabolism. Its activity is regulated as follows. Activity is inhibited by 2-nitroresorcinol (2-NR). In terms of biological role, involved in the gamma-resorcylate (2,6-dihydroxybenzoate) catabolism. Catalyzes the reversible decarboxylation of gamma-resorcylate to resorcinol. Also catalyzes the decarboxylation of 2,3-dihydroxybenzoate to catechol, 2,4,6-trihydroxybenzoate to benzene-1,3,5-triol, and 2,6-dihydroxy-4-methylbenzoate to 5-methylbenzene-1,3-diol. The polypeptide is Gamma-resorcylate decarboxylase (Polaromonas sp. (strain JS666 / ATCC BAA-500)).